The chain runs to 63 residues: 2-hydroxymuconate tautomerase (63 aa).

The Proton acceptor; via imino nitrogen role is filled by Pro-2.

It belongs to the 4-oxalocrotonate tautomerase family. Homohexamer.

The catalysed reaction is (2Z,4E)-2-hydroxyhexa-2,4-dienedioate = (3E)-2-oxohex-3-enedioate. Its pathway is xenobiotic degradation; toluene degradation. The protein operates within xenobiotic degradation; xylene degradation. Functionally, catalyzes the ketonization of 2-hydroxymuconate stereoselectively to yield 2-oxo-3-hexenedioate. This chain is 2-hydroxymuconate tautomerase (xylH), found in Pseudomonas putida (Arthrobacter siderocapsulatus).